The sequence spans 127 residues: Fluoride-specific ion channel FluC (127 aa).

4 consecutive transmembrane segments (helical) span residues T4–V24, L35–F55, T71–L91, and V103–W123. G75 and T78 together coordinate Na(+).

Belongs to the fluoride channel Fluc/FEX (TC 1.A.43) family.

The protein localises to the cell inner membrane. It carries out the reaction fluoride(in) = fluoride(out). Na(+) is not transported, but it plays an essential structural role and its presence is essential for fluoride channel function. In terms of biological role, fluoride-specific ion channel. Important for reducing fluoride concentration in the cell, thus reducing its toxicity. The sequence is that of Fluoride-specific ion channel FluC from Pectobacterium atrosepticum (strain SCRI 1043 / ATCC BAA-672) (Erwinia carotovora subsp. atroseptica).